The chain runs to 391 residues: tRNA-specific 2-thiouridylase MnmA (391 aa).

ATP contacts are provided by residues 20 to 27 and leucine 46; that span reads AMSGGVDS. The Nucleophile role is filled by cysteine 114. A disulfide bridge links cysteine 114 with cysteine 210. Glycine 138 serves as a coordination point for ATP. Positions 160–162 are interaction with tRNA; sequence RDQ. The Cysteine persulfide intermediate role is filled by cysteine 210.

Belongs to the MnmA/TRMU family.

The protein localises to the cytoplasm. It carries out the reaction S-sulfanyl-L-cysteinyl-[protein] + uridine(34) in tRNA + AH2 + ATP = 2-thiouridine(34) in tRNA + L-cysteinyl-[protein] + A + AMP + diphosphate + H(+). Functionally, catalyzes the 2-thiolation of uridine at the wobble position (U34) of tRNA, leading to the formation of s(2)U34. The polypeptide is tRNA-specific 2-thiouridylase MnmA (Bartonella bacilliformis (strain ATCC 35685 / KC583 / Herrer 020/F12,63)).